Consider the following 165-residue polypeptide: 2-C-methyl-D-erythritol 2,4-cyclodiphosphate synthase (165 aa).

2 residues coordinate a divalent metal cation: Asp8 and His10. 4-CDP-2-C-methyl-D-erythritol 2-phosphate contacts are provided by residues Asp8–His10 and His34–Ser35. His42 contributes to the a divalent metal cation binding site. 4-CDP-2-C-methyl-D-erythritol 2-phosphate contacts are provided by residues Asp56–Gly58, Phe61–Asp65, Thr132–Glu135, Phe139, and Arg142.

The protein belongs to the IspF family. Homotrimer. It depends on a divalent metal cation as a cofactor.

It carries out the reaction 4-CDP-2-C-methyl-D-erythritol 2-phosphate = 2-C-methyl-D-erythritol 2,4-cyclic diphosphate + CMP. It participates in isoprenoid biosynthesis; isopentenyl diphosphate biosynthesis via DXP pathway; isopentenyl diphosphate from 1-deoxy-D-xylulose 5-phosphate: step 4/6. Functionally, involved in the biosynthesis of isopentenyl diphosphate (IPP) and dimethylallyl diphosphate (DMAPP), two major building blocks of isoprenoid compounds. Catalyzes the conversion of 4-diphosphocytidyl-2-C-methyl-D-erythritol 2-phosphate (CDP-ME2P) to 2-C-methyl-D-erythritol 2,4-cyclodiphosphate (ME-CPP) with a corresponding release of cytidine 5-monophosphate (CMP). This Halothermothrix orenii (strain H 168 / OCM 544 / DSM 9562) protein is 2-C-methyl-D-erythritol 2,4-cyclodiphosphate synthase.